An 827-amino-acid polypeptide reads, in one-letter code: Villin-1 (827 aa).

The tract at residues 1-126 (MTKLNAQVKG…IRKGGVASGM (126 aa)) is necessary for homodimerization. The core stretch occupies residues 1-734 (MTKLNAQVKG…YEDLKAELGN (734 aa)). A Gelsolin-like 1 repeat occupies 28–107 (QMVPVSSSTY…EVQGNESEAF (80 aa)). LPA/PIP2-binding site stretches follow at residues 112–119 (KQGIVIRK) and 138–146 (RLLHVKGKR). Gelsolin-like repeat units lie at residues 148–216 (VVAG…GEDE) and 269–342 (EVAT…SAVF). Ser366 carries the phosphoserine modification. Gelsolin-like repeat units lie at residues 409–489 (DLVP…PHLM), 528–595 (TKAF…ANFW), and 634–707 (TEIP…PPTF). At Ser735 the chain carries Phosphoserine. Positions 761–827 (SGPLPIFPLE…QNLKKEKGLF (67 aa)) constitute an HP domain. The tract at residues 816–824 (KQQNLKKEK) is LPA/PIP2-binding site 3.

Belongs to the villin/gelsolin family. Monomer. Homodimer; homodimerization is necessary for actin-bundling. Associates with F-actin; phosphorylation at tyrosine residues decreases the association with F-actin. Interacts (phosphorylated at C-terminus tyrosine phosphorylation sites) with PLCG1 (via the SH2 domains). Interacts (phosphorylated form) with PLCG1; the interaction is enhanced by hepatocyte growth factor (HGF). Post-translationally, phosphorylated on tyrosine residues by SRC. The unphosphorylated form increases the initial rate of actin-nucleating activity, whereas the tyrosine-phosphorylated form inhibits actin-nucleating activity, enhances actin-bundling activity and enhances actin-severing activity by reducing high Ca(2+) requirements. The tyrosine-phosphorylated form does not regulate actin-capping activity. Tyrosine phosphorylation is essential for cell migration: tyrosine phosphorylation sites in the N-terminus half regulate actin reorganization and cell morphology, whereas tyrosine phosphorylation sites in the C-terminus half regulate cell migration. Tyrosine phosphorylation is induced by epidermal growth factor (EGF) and stimulates cell migration.

It is found in the cytoplasm. The protein resides in the cytoskeleton. Its subcellular location is the cell projection. It localises to the lamellipodium. The protein localises to the ruffle. It is found in the microvillus. The protein resides in the filopodium tip. Its subcellular location is the filopodium. In terms of biological role, epithelial cell-specific Ca(2+)-regulated actin-modifying protein that modulates the reorganization of microvillar actin filaments. Plays a role in the actin nucleation, actin filament bundle assembly, actin filament capping and severing. Binds phosphatidylinositol 4,5-bisphosphate (PIP2) and lysophosphatidic acid (LPA); binds LPA with higher affinity than PIP2. Binding to LPA increases its phosphorylation by SRC and inhibits all actin-modifying activities. Binding to PIP2 inhibits actin-capping and -severing activities but enhances actin-bundling activity. Regulates the intestinal epithelial cell morphology, cell invasion, cell migration and apoptosis. Protects against apoptosis induced by dextran sodium sulfate (DSS) in the gastrointestinal epithelium. Appears to regulate cell death by maintaining mitochondrial integrity. Enhances hepatocyte growth factor (HGF)-induced epithelial cell motility, chemotaxis and wound repair. In Sus scrofa (Pig), this protein is Villin-1 (VIL1).